A 682-amino-acid polypeptide reads, in one-letter code: Potassium-transporting ATPase ATP-binding subunit (682 aa).

4 helical membrane-spanning segments follow: residues 34-54 (PVMF…LAMV), 58-78 (IAGS…TVLF), 219-239 (IALT…TATL), and 254-274 (VLVA…LSAI). Asp-307 acts as the 4-aspartylphosphate intermediate in catalysis. Residues Asp-344, Glu-348, 377–384 (FTAQSRMS), and Lys-395 contribute to the ATP site. Mg(2+)-binding residues include Asp-518 and Asp-522. 3 consecutive transmembrane segments (helical) span residues 588-608 (FAII…LNVM), 616-636 (AILS…PLAL), and 662-682 (LVVP…LGLA).

This sequence belongs to the cation transport ATPase (P-type) (TC 3.A.3) family. Type IA subfamily. As to quaternary structure, the system is composed of three essential subunits: KdpA, KdpB and KdpC.

It localises to the cell inner membrane. It carries out the reaction K(+)(out) + ATP + H2O = K(+)(in) + ADP + phosphate + H(+). In terms of biological role, part of the high-affinity ATP-driven potassium transport (or Kdp) system, which catalyzes the hydrolysis of ATP coupled with the electrogenic transport of potassium into the cytoplasm. This subunit is responsible for energy coupling to the transport system and for the release of the potassium ions to the cytoplasm. The sequence is that of Potassium-transporting ATPase ATP-binding subunit from Salmonella paratyphi B (strain ATCC BAA-1250 / SPB7).